Consider the following 591-residue polypeptide: MEKRTSYCGELNEAHIGQSVVLHGWVQKRRDLGGLIFIDLRDREGIVQVVFNPEFSKEALEIADSVRNEFVVTIKGTVHARGEKAINEKLATGKVEVLAEEITILNTSKTPPFYIEDGVNVSDELRLKYRYLDLRRPEMNNIFKMRHTVTRTFRNKLDALGFFDIETPYLTKSTPEGARDYLVPSRVYPGNFYALPQSPQILKQLLMTAGFDKYYQIVRCFRDEDLRGDRQPEFTQIDLETSFLTKEEIQAITEDMLVDVVKEAKNITIEKPFPRMTYKEAMDRFGSDKPDIRFGLELQNVSDVVKDVDFKVFQSAIENGGEVKAINAKAAAANFSRKDLDALGVFVANYGAKGLAWLKVEAGELKGPIAKFFPEDKAAELKVALQAEDGDLLLFAADKADIVAASLGALRNKLGKDLNLINEEELAFLWVTDWPLFEYDEEAERYVSAHHPFTLPKEEDIPLLETDSSKVMAEAYDIVLNGYEIGGGSLRIYKKEVQESMFRALGFTDESAKEQFGFLMDALEYGTPPHGGIALGLDRIVMILAGRNNLRDTIAFPKTGSAVDPLTNAPGEVSEAQLAELKLETVKKETN.

Residue glutamate 176 participates in L-aspartate binding. Residues glutamine 200–lysine 203 are aspartate. Arginine 222 contacts L-aspartate. Residues arginine 222 to glutamate 224 and glutamine 231 contribute to the ATP site. Histidine 450 contributes to the L-aspartate binding site. Glutamate 484 serves as a coordination point for ATP. Arginine 491 is a binding site for L-aspartate. Residue glycine 536 to arginine 539 participates in ATP binding.

It belongs to the class-II aminoacyl-tRNA synthetase family. Type 1 subfamily. As to quaternary structure, homodimer.

Its subcellular location is the cytoplasm. It carries out the reaction tRNA(Asp) + L-aspartate + ATP = L-aspartyl-tRNA(Asp) + AMP + diphosphate. In terms of biological role, catalyzes the attachment of L-aspartate to tRNA(Asp) in a two-step reaction: L-aspartate is first activated by ATP to form Asp-AMP and then transferred to the acceptor end of tRNA(Asp). This is Aspartate--tRNA ligase from Listeria monocytogenes serovar 1/2a (strain ATCC BAA-679 / EGD-e).